Here is a 136-residue protein sequence, read N- to C-terminus: Putative pre-16S rRNA nuclease (136 aa).

The protein belongs to the YqgF nuclease family.

It localises to the cytoplasm. Its function is as follows. Could be a nuclease involved in processing of the 5'-end of pre-16S rRNA. This chain is Putative pre-16S rRNA nuclease, found in Francisella tularensis subsp. holarctica (strain FTNF002-00 / FTA).